The sequence spans 230 residues: MSKKAVVLYSGGLDSTTCLAEARAAGFTPYALSFHYGQRHTVELEKARLYAPQVGAADHMVIDFDLRRIGGSALTSDEEVPKGREIDDAIPVTYVPARNTIFLSFALGWAEVLGSFDIFIGVNALDYSGYPDCRPEFISAFEQLANLATKAGVEGQGQYRVHAPLLHLTKAQIIKRGLELGVDYSLTHSCYDPTPEGLACGLCDSCQLRLKGFAEAGISDPAAYAREVQR.

Tyr9–Leu19 contacts ATP. 4 residues coordinate Zn(2+): Cys190, Cys200, Cys203, and Cys206.

Belongs to the QueC family. Requires Zn(2+) as cofactor.

It catalyses the reaction 7-carboxy-7-deazaguanine + NH4(+) + ATP = 7-cyano-7-deazaguanine + ADP + phosphate + H2O + H(+). The protein operates within purine metabolism; 7-cyano-7-deazaguanine biosynthesis. Functionally, catalyzes the ATP-dependent conversion of 7-carboxy-7-deazaguanine (CDG) to 7-cyano-7-deazaguanine (preQ(0)). This chain is 7-cyano-7-deazaguanine synthase, found in Syntrophotalea carbinolica (strain DSM 2380 / NBRC 103641 / GraBd1) (Pelobacter carbinolicus).